The primary structure comprises 331 residues: Cytosolic arginine sensor for mTORC1 subunit 1 (331 aa).

A Phosphoserine modification is found at S14. The ACT 1 domain maps to A72–E139. S110–V111 contributes to the L-arginine binding site. The segment at G155–H174 is disordered. Positions D156 to H174 are enriched in polar residues. The ACT 2 domain maps to W262–R322. L-arginine is bound by residues G273, I279–V280, and T299–D303.

This sequence belongs to the GATS family. In terms of assembly, forms homodimers and heterodimers with CASTOR2. Interacts with the GATOR2 complex which is composed of MIOS, SEC13, SEH1L, WDR24 and WDR59; the interaction is negatively regulated by arginine. Interacts with TM4SF5; the interaction is positively regulated by leucine and is negatively regulated by arginine. Phosphorylation at Ser-14 by AKT1, promoting the interaction between CASTOR1 and RNF167. In terms of processing, ubiquitinated by RNF167 via 'Lys-29'-polyubiquitination, leading to its degradation, releasing the GATOR2 complex. Ubiquitination by RNF167 is promoted by phosphorylation at Ser-14 by AKT1.

The protein resides in the cytoplasm. It localises to the cytosol. Its function is as follows. Functions as an intracellular arginine sensor within the amino acid-sensing branch of the TORC1 signaling pathway. As a homodimer or a heterodimer with CASTOR2, binds and inhibits the GATOR subcomplex GATOR2 and thereby mTORC1. Binding of arginine to CASTOR1 allosterically disrupts the interaction of CASTOR1-containing dimers with GATOR2 which can in turn activate mTORC1 and the TORC1 signaling pathway. The polypeptide is Cytosolic arginine sensor for mTORC1 subunit 1 (Rattus norvegicus (Rat)).